A 460-amino-acid chain; its full sequence is Probable carboxypeptidase TRV_02791 (460 aa).

The signal sequence occupies residues 1-22 (MQKTYLWALVSLLASSLVDARS). N-linked (GlcNAc...) asparagine glycosylation is present at asparagine 98. Zn(2+) is bound at residue aspartate 175. Glutamate 207 serves as the catalytic Proton acceptor. Glutamate 208 is a Zn(2+) binding site. N-linked (GlcNAc...) asparagine glycosylation is present at asparagine 395.

This sequence belongs to the peptidase M20A family. It depends on Zn(2+) as a cofactor.

It is found in the secreted. In Trichophyton verrucosum (strain HKI 0517), this protein is Probable carboxypeptidase TRV_02791.